Here is a 490-residue protein sequence, read N- to C-terminus: Cheilanthifoline synthase (490 aa).

The helical transmembrane segment at 2–22 threads the bilayer; the sequence is EESLWVVTATVVVVFAIAKLL. C432 provides a ligand contact to heme.

It belongs to the cytochrome P450 family. Heme serves as cofactor. As to expression, expressed in roots. Detected in leaves and stems.

The protein localises to the endoplasmic reticulum membrane. It carries out the reaction (S)-scoulerine + reduced [NADPH--hemoprotein reductase] + O2 = (S)-cheilanthifoline + oxidized [NADPH--hemoprotein reductase] + 2 H2O + H(+). The protein operates within alkaloid biosynthesis. Its function is as follows. Methylenedioxy bridge-forming cytochrome P450 involved in the biosynthesis of isoquinoline alkaloids. Converts (S)-scoulerine into (R,S)-cheilanthifoline. Catalyzes an oxidative reaction that does not incorporate oxygen into the product. This Eschscholzia californica (California poppy) protein is Cheilanthifoline synthase (CYP719A5).